We begin with the raw amino-acid sequence, 277 residues long: Transcription antiterminator LicT (277 aa).

PRD domains follow at residues 65–170 and 171–277; these read DIPI…EEMP and NIIN…VKQA.

The protein belongs to the transcriptional antiterminator BglG family. Phosphorylated.

Functionally, mediates positive regulation of the glucanase operon (licST) by functioning as an antiterminator factor of transcription. Prevents termination at terminator lic-t. The chain is Transcription antiterminator LicT (licT) from Bacillus subtilis (strain 168).